Reading from the N-terminus, the 80-residue chain is SPbeta prophage-derived uncharacterized HTH-type transcriptional regulator YotL (80 aa).

Positions 12–67 (LNELMHEYSVSIEDLVECTGLSKQRINDYVGGFKSNMNIGTAMTFADAIGCSIEEL) constitute an HTH cro/C1-type domain. Residues 23–42 (IEDLVECTGLSKQRINDYVG) constitute a DNA-binding region (H-T-H motif).

The sequence is that of SPbeta prophage-derived uncharacterized HTH-type transcriptional regulator YotL (yotL) from Bacillus subtilis (strain 168).